A 133-amino-acid chain; its full sequence is Protransforming growth factor alpha (133 aa).

Positions 1 to 23 (MVPSAGQLALFALGIFLAVCQAL) are cleaved as a signal peptide. Residues 24-38 (ENSTSALSDPPVAAA) constitute a propeptide, removed in mature form. Over 24 to 97 (ENSTSALSDP…AVVAASQKKQ (74 aa)) the chain is Extracellular. Asn-25 carries N-linked (GlcNAc...) asparagine glycosylation. Residues 42–82 (HFNDCPDSHTQFCFHGTCRFLLQEEKPACVCHSGYVGARCE) enclose the EGF-like domain. Cystine bridges form between Cys-46/Cys-59, Cys-54/Cys-70, and Cys-72/Cys-81. The propeptide at 89–133 (VVAASQKKQAITALVVVTIVALAVLIITCVLIHCCEVRKHSVVVP) is removed in mature form. A helical membrane pass occupies residues 98–120 (AITALVVVTIVALAVLIITCVLI). Topologically, residues 121-133 (HCCEVRKHSVVVP) are cytoplasmic.

Interacts with the PDZ domains of MAGI3, SDCBP and SNTA1. The interaction with SDCBP, is required for the targeting to the cell surface. In the endoplasmic reticulum, in its immature form (i.e. with a prosegment and lacking full N-glycosylation), interacts with CNIH. In the Golgi apparatus, may form a complex with CNIH and GORASP2. Interacts (via cytoplasmic C-terminal domain) with NKD2. In terms of tissue distribution, skin.

The protein localises to the secreted. The protein resides in the extracellular space. It localises to the cell membrane. In terms of biological role, TGF alpha is a mitogenic polypeptide that is able to bind to the EGF receptor/EGFR and to act synergistically with TGF beta to promote anchorage-independent cell proliferation in soft agar. This Ovis aries (Sheep) protein is Protransforming growth factor alpha (TGFA).